The sequence spans 818 residues: Patatin-like phospholipase domain-containing protein YALI0D16379g (818 aa).

Disordered regions lie at residues 1–50 (MLKL…RDVN) and 154–178 (EEKR…KTKE). A compositionally biased stretch (polar residues) spans 22–38 (SQQLTLDSPEGSETSSR). Residues 164–178 (KDKEGSEGDKTKTKE) show a composition bias toward basic and acidic residues. The chain crosses the membrane as a helical span at residues 223 to 243 (WPALFFIGMWLLFLTTIYASV). The 192-residue stretch at 398 to 589 (LCLSGGGCFA…RTDIPVDALN (192 aa)) folds into the PNPLA domain. The short motif at 429–433 (GTSGG) is the GXSXG element. Serine 431 functions as the Nucleophile in the catalytic mechanism. Aspartate 576 (proton acceptor) is an active-site residue. The tract at residues 781–805 (AGTDISSSNSDYDHEPQWEMDEGDS) is disordered.

This sequence belongs to the PLPL family.

The protein localises to the membrane. Functionally, probable lipid hydrolase. The chain is Patatin-like phospholipase domain-containing protein YALI0D16379g from Yarrowia lipolytica (strain CLIB 122 / E 150) (Yeast).